Here is a 127-residue protein sequence, read N- to C-terminus: MFRTLMNAKIHRARVTEANLNYVGSITIDADILDAVGMVPNEKVQIVNNNNGARFETYIIPGERGSGVFCLNGAAARLVQKGDIIIVISYAIVPEEKIAQHRPKIAIMDENNRIQQLIVEEPAHTVL.

Residue serine 25 is the Schiff-base intermediate with substrate; via pyruvic acid of the active site. Residue serine 25 is modified to Pyruvic acid (Ser). Substrate is bound at residue threonine 57. Tyrosine 58 acts as the Proton donor in catalysis. 73-75 (GAA) is a binding site for substrate.

The protein belongs to the PanD family. In terms of assembly, heterooctamer of four alpha and four beta subunits. The cofactor is pyruvate. Post-translationally, is synthesized initially as an inactive proenzyme, which is activated by self-cleavage at a specific serine bond to produce a beta-subunit with a hydroxyl group at its C-terminus and an alpha-subunit with a pyruvoyl group at its N-terminus.

The protein localises to the cytoplasm. It carries out the reaction L-aspartate + H(+) = beta-alanine + CO2. It participates in cofactor biosynthesis; (R)-pantothenate biosynthesis; beta-alanine from L-aspartate: step 1/1. In terms of biological role, catalyzes the pyruvoyl-dependent decarboxylation of aspartate to produce beta-alanine. The chain is Aspartate 1-decarboxylase from Geobacillus sp. (strain WCH70).